Reading from the N-terminus, the 448-residue chain is Protease Do-like 8, chloroplastic (448 aa).

The serine protease stretch occupies residues Glu152–Val333. Active-site charge relay system residues include His171, Asp214, and Ser292. Positions Leu336–Gly433 constitute a PDZ domain.

It belongs to the peptidase S1C family.

It localises to the plastid. The protein localises to the chloroplast thylakoid lumen. In terms of biological role, probable serine protease. The protein is Protease Do-like 8, chloroplastic (DEGP8) of Arabidopsis thaliana (Mouse-ear cress).